Here is a 1167-residue protein sequence, read N- to C-terminus: RNA-directed RNA polymerase (1167 aa).

In terms of domain architecture, RdRp catalytic spans 553-735 (LTYGILAEAT…KALASYTGLE (183 aa)).

Belongs to the reoviridae RNA-directed RNA polymerase family. As to quaternary structure, interacts with VP3 (Potential). Interacts with VP2 (Potential). Interacts with NSP5; this interaction is probably necessary for the formation of functional virus factories.

It is found in the virion. The enzyme catalyses RNA(n) + a ribonucleoside 5'-triphosphate = RNA(n+1) + diphosphate. Its function is as follows. RNA-directed RNA polymerase that is involved in both transcription and genome replication. Together with VP3 capping enzyme, forms an enzyme complex positioned near the channels situated at each of the five-fold vertices of the core. Following infection, the outermost layer of the virus is lost, leaving a double-layered particle (DLP) made up of the core and VP6 shell. VP1 then catalyzes the transcription of fully conservative plus-strand genomic RNAs that are extruded through the DLP's channels into the cytoplasm where they function as mRNAs for translation of viral proteins. One copy of each of the viral (+)RNAs is also recruited during core assembly, together with newly synthesized polymerase complexes and VP2. The polymerase of these novo-formed particles catalyzes the synthesis of complementary minus-strands leading to dsDNA formation. To do so, the polymerase specifically recognizes conserved 3' sequence(s) in plus-strand RNA templates. Once dsRNA synthesis is complete, the polymerase switches to the transcriptional mode, thus providing secondary transcription. This chain is RNA-directed RNA polymerase, found in Rotavirus X (strain RVX/Human/China/NADRV-J19/1997/GXP[X]) (RV ADRV-N).